The primary structure comprises 196 residues: Ribonuclease HII (196 aa).

The region spanning 15-196 (FILAGIDEAG…RLSFTKALYK (182 aa)) is the RNase H type-2 domain. Positions 21, 22, and 112 each coordinate a divalent metal cation.

The protein belongs to the RNase HII family. The cofactor is Mn(2+). Requires Mg(2+) as cofactor.

It localises to the cytoplasm. The enzyme catalyses Endonucleolytic cleavage to 5'-phosphomonoester.. In terms of biological role, endonuclease that specifically degrades the RNA of RNA-DNA hybrids. The polypeptide is Ribonuclease HII (Rickettsia bellii (strain OSU 85-389)).